A 406-amino-acid polypeptide reads, in one-letter code: Tryptophan synthase beta chain (406 aa).

Position 99 is an N6-(pyridoxal phosphate)lysine (Lys-99).

Belongs to the TrpB family. As to quaternary structure, tetramer of two alpha and two beta chains. Pyridoxal 5'-phosphate serves as cofactor.

The catalysed reaction is (1S,2R)-1-C-(indol-3-yl)glycerol 3-phosphate + L-serine = D-glyceraldehyde 3-phosphate + L-tryptophan + H2O. It functions in the pathway amino-acid biosynthesis; L-tryptophan biosynthesis; L-tryptophan from chorismate: step 5/5. In terms of biological role, the beta subunit is responsible for the synthesis of L-tryptophan from indole and L-serine. In Brucella abortus (strain 2308), this protein is Tryptophan synthase beta chain.